We begin with the raw amino-acid sequence, 273 residues long: Hydroxyethylthiazole kinase (273 aa).

Residue Met49 participates in substrate binding. 2 residues coordinate ATP: Arg125 and Thr171. Gly198 contacts substrate.

It belongs to the Thz kinase family. Mg(2+) serves as cofactor.

It carries out the reaction 5-(2-hydroxyethyl)-4-methylthiazole + ATP = 4-methyl-5-(2-phosphooxyethyl)-thiazole + ADP + H(+). It functions in the pathway cofactor biosynthesis; thiamine diphosphate biosynthesis; 4-methyl-5-(2-phosphoethyl)-thiazole from 5-(2-hydroxyethyl)-4-methylthiazole: step 1/1. Functionally, catalyzes the phosphorylation of the hydroxyl group of 4-methyl-5-beta-hydroxyethylthiazole (THZ). This chain is Hydroxyethylthiazole kinase, found in Desulforudis audaxviator (strain MP104C).